The sequence spans 616 residues: Dihydroxy-acid dehydratase (616 aa).

Aspartate 81 is a Mg(2+) binding site. A [2Fe-2S] cluster-binding site is contributed by cysteine 122. Positions 123 and 124 each coordinate Mg(2+). Lysine 124 is modified (N6-carboxylysine). Residue cysteine 195 coordinates [2Fe-2S] cluster. Glutamate 491 lines the Mg(2+) pocket. Catalysis depends on serine 517, which acts as the Proton acceptor.

This sequence belongs to the IlvD/Edd family. As to quaternary structure, homodimer. The cofactor is [2Fe-2S] cluster. Requires Mg(2+) as cofactor.

The enzyme catalyses (2R)-2,3-dihydroxy-3-methylbutanoate = 3-methyl-2-oxobutanoate + H2O. It carries out the reaction (2R,3R)-2,3-dihydroxy-3-methylpentanoate = (S)-3-methyl-2-oxopentanoate + H2O. The protein operates within amino-acid biosynthesis; L-isoleucine biosynthesis; L-isoleucine from 2-oxobutanoate: step 3/4. It functions in the pathway amino-acid biosynthesis; L-valine biosynthesis; L-valine from pyruvate: step 3/4. Its function is as follows. Functions in the biosynthesis of branched-chain amino acids. Catalyzes the dehydration of (2R,3R)-2,3-dihydroxy-3-methylpentanoate (2,3-dihydroxy-3-methylvalerate) into 2-oxo-3-methylpentanoate (2-oxo-3-methylvalerate) and of (2R)-2,3-dihydroxy-3-methylbutanoate (2,3-dihydroxyisovalerate) into 2-oxo-3-methylbutanoate (2-oxoisovalerate), the penultimate precursor to L-isoleucine and L-valine, respectively. The sequence is that of Dihydroxy-acid dehydratase from Escherichia coli (strain SMS-3-5 / SECEC).